Here is a 1782-residue protein sequence, read N- to C-terminus: A-kinase anchor protein 12 (1782 aa).

8 disordered regions span residues 1 to 53 (MGAG…DPAT), 71 to 169 (QDEL…QAND), 189 to 400 (KTEK…APLA), 421 to 886 (VSTV…ELSE), 938 to 1089 (EREV…LKKE), 1105 to 1134 (PFTQGKVVGQTTPESFEKAPQVTESIESSE), 1157 to 1274 (AIPP…ADEK), and 1305 to 1355 (KGEG…HVNE). Gly-2 is lipidated: N-myristoyl glycine. Phosphoserine occurs at positions 11, 19, 28, 75, and 96. Residues 16–53 (PEGSSTPAEPEPSGGGPSAEAAPDTTADPAIAASDPAT) show a composition bias toward low complexity. Positions 108–125 (GQRDSEDVSKRDSDKEMA) are enriched in basic and acidic residues. Residues 145-154 (IIEQIPSSES) show a composition bias toward low complexity. A Phosphoserine modification is found at Ser-154. Residues 157–168 (EELTQPTESQAN) are compositionally biased toward polar residues. Ser-219, Ser-248, Ser-258, Ser-280, Ser-283, Ser-286, Ser-347, and Ser-371 each carry phosphoserine. Positions 226 to 249 (ASKESEPKQSTEKPEETLKREQSH) are enriched in basic and acidic residues. The interval 266–557 (KEEGEEKQEK…TQVPADSPDS (292 aa)) is involved in PKC-binding. Composition is skewed to basic and acidic residues over residues 315–347 (KPKEDEVEASEKKKEQEPEKVDTEEDGKAEVAS) and 363–379 (ESAHEPRLSAEYEKVEL). At Tyr-374 the chain carries Phosphotyrosine. Phosphoserine occurs at positions 381 and 392. The span at 423–435 (TVEERTEEQKTEV) shows a compositional bias: basic and acidic residues. Residues 446–456 (ELVEMDAEPQE) show a composition bias toward acidic residues. Basic and acidic residues predominate over residues 458–468 (EPAKELVKLKE). Residues Ser-483 and Ser-505 each carry the phosphoserine modification. Residues 528–537 (LSGKKQKGKR) show a composition bias toward basic residues. Ser-554, Ser-557, Ser-598, Ser-612, Ser-627, and Ser-629 each carry phosphoserine. The short motif at 607-627 (VTPWASFKKMVTPKKRVRRPS) is the AKAP CaM-binding 1 element. Positions 625–639 (RPSESDKEDELDKVK) are enriched in basic and acidic residues. The span at 640–652 (SATLSSTESTASE) shows a compositional bias: low complexity. Thr-642 carries the post-translational modification Phosphothreonine. A phosphoserine mark is found at Ser-644, Ser-645, Ser-648, and Ser-651. Residues 655-674 (EEMKGSVEEPKPEEPKRKVD) are compositionally biased toward basic and acidic residues. 3 positions are modified to phosphoserine: Ser-696, Ser-697, and Ser-698. Over residues 708 to 724 (GGDHQKADEAGKDKETG) the composition is skewed to basic and acidic residues. A compositionally biased stretch (polar residues) spans 739–749 (QGSSSPEQAGS). Ser-749, Ser-761, and Ser-787 each carry phosphoserine. The AKAP CaM-binding 2 signature appears at 756–776 (VSTWESFKRLVTPRKKSKSKL). The span at 792-803 (STPDTEPGKEES) shows a compositional bias: basic and acidic residues. The AKAP CaM-binding 3 signature appears at 801-821 (EESWVSIKKFIPGRRKKRPDG). Ser-806 bears the Phosphoserine mark. The segment covering 986 to 997 (GAEEGTEASAAE) has biased composition (low complexity). Lys-1051 is covalently cross-linked (Glycyl lysine isopeptide (Lys-Gly) (interchain with G-Cter in SUMO1)). Residues 1072-1089 (AEAERPEEQAEASGLKKE) show a composition bias toward basic and acidic residues. Residues 1164 to 1174 (ETPTDSETDGS) show a composition bias toward polar residues. Composition is skewed to basic and acidic residues over residues 1187 to 1198 (QKDEIVEIHEEN) and 1231 to 1251 (EETKEQSKMEDTLEHTDKEVS). Positions 1253-1267 (ETVSILSKTEGTQEA) are enriched in polar residues. Ser-1328 and Ser-1331 each carry phosphoserine. Over residues 1333-1355 (VEREMVVQVEREKTEAEPTHVNE) the composition is skewed to basic and acidic residues. Phosphoserine occurs at positions 1391 and 1395. An RII-binding region spans residues 1541-1554 (ELETKSSKLVQNII). The interval 1584 to 1782 (KADSQDAGQE…ESAKSELTES (199 aa)) is disordered. Position 1587 is a phosphoserine (Ser-1587). Over residues 1603–1612 (ASAQDETPIT) the composition is skewed to polar residues. Composition is skewed to basic and acidic residues over residues 1629–1639 (DISKDMSEASE) and 1675–1699 (VPEDDGHALLAERIEKSLVEPKEDE). Ser-1727 is modified (phosphoserine). 2 stretches are compositionally biased toward basic and acidic residues: residues 1734 to 1757 (KQKEKEDAQEVELQEGKVHSESDK) and 1766 to 1782 (ELQKQERESAKSELTES).

As to quaternary structure, binds to dimeric RII-alpha regulatory subunit of PKC. In terms of tissue distribution, expressed in endothelial cells, cultured fibroblasts and osteosarcoma, but not in platelets, leukocytes, monocytic cell lines or peripherical blood cells.

Its subcellular location is the cytoplasm. It is found in the cell cortex. It localises to the cytoskeleton. The protein resides in the membrane. Functionally, anchoring protein that mediates the subcellular compartmentation of protein kinase A (PKA) and protein kinase C (PKC). The polypeptide is A-kinase anchor protein 12 (AKAP12) (Homo sapiens (Human)).